Consider the following 334-residue polypeptide: Formamidase (334 aa).

The CN hydrolase domain occupies 14–260 (FLVAAIQFPV…WEIVTGEIYP (247 aa)). The active-site Proton acceptor is glutamate 60. The active-site Proton donor is the lysine 133. Catalysis depends on cysteine 166, which acts as the Nucleophile.

It belongs to the carbon-nitrogen hydrolase superfamily. Aliphatic amidase family.

The catalysed reaction is formamide + H2O = formate + NH4(+). Its function is as follows. Is an aliphatic amidase with a restricted substrate specificity, as it only hydrolyzes formamide. The polypeptide is Formamidase (Helicobacter pylori (strain Shi470)).